Reading from the N-terminus, the 387-residue chain is Intraflagellar transport protein 57 (387 aa).

It belongs to the IFT57 family.

The protein resides in the cell projection. It is found in the cilium. The protein localises to the flagellum. It localises to the cytoplasm. Its subcellular location is the cytoskeleton. The protein resides in the flagellum axoneme. It is found in the flagellum basal body. In terms of biological role, component of the intraflagellar transport complex B (IFT-B) involved in flagellar assembly. The chain is Intraflagellar transport protein 57 from Giardia intestinalis (strain ATCC 50803 / WB clone C6) (Giardia lamblia).